The primary structure comprises 334 residues: MIIAVDGMGGDFAPYAVVEGIIEAVKEQDINIIITGKKELIEAELKKYEYEREKIRILDTREVITTSESPVMALRRKKDSSLVKALQLVKEGKADAAISAGSTGALMSGATLIVGRIKGIERVALAPMIPGKNGAFMIIDAGANVDCKPHYLLQFSLMGKIYFENVLKIKEPSIGLVNIGTEEEKGNELTKNTYKLLKDMDFNFVGNVEPREATNGDVNILVCDGFVGNTILKTYEGVSLNLIHMIKEEIMKSTTSKLAGVFLKPVFKKIKSRLDYSEYGGSAFLGCKGICVKAHGSSNGKAFKNAIKQAVICYDNKVIDKIKFEIEKIYNREE.

This sequence belongs to the PlsX family. In terms of assembly, homodimer. Probably interacts with PlsY.

It localises to the cytoplasm. The enzyme catalyses a fatty acyl-[ACP] + phosphate = an acyl phosphate + holo-[ACP]. The protein operates within lipid metabolism; phospholipid metabolism. Catalyzes the reversible formation of acyl-phosphate (acyl-PO(4)) from acyl-[acyl-carrier-protein] (acyl-ACP). This enzyme utilizes acyl-ACP as fatty acyl donor, but not acyl-CoA. The sequence is that of Phosphate acyltransferase from Clostridium kluyveri (strain NBRC 12016).